The primary structure comprises 675 residues: Potassium-transporting ATPase ATP-binding subunit (675 aa).

Helical transmembrane passes span 38–58, 67–87, 216–236, and 253–273; these read VMFV…ANLV, LAIT…EGMA, IALS…VVTL, and IALL…AIGI. Asp-304 (4-aspartylphosphate intermediate) is an active-site residue. ATP contacts are provided by residues Asp-341, Glu-345, 371-378, and Lys-389; that span reads FTAQTRMS. Mg(2+) contacts are provided by Asp-512 and Asp-516. Helical transmembrane passes span 582 to 602, 610 to 630, and 654 to 674; these read FAIL…LNVM, AVLS…PLAL, and GGIL…GGLM.

Belongs to the cation transport ATPase (P-type) (TC 3.A.3) family. Type IA subfamily. The system is composed of three essential subunits: KdpA, KdpB and KdpC.

The protein resides in the cell membrane. It carries out the reaction K(+)(out) + ATP + H2O = K(+)(in) + ADP + phosphate + H(+). Part of the high-affinity ATP-driven potassium transport (or Kdp) system, which catalyzes the hydrolysis of ATP coupled with the electrogenic transport of potassium into the cytoplasm. This subunit is responsible for energy coupling to the transport system and for the release of the potassium ions to the cytoplasm. This Deinococcus radiodurans (strain ATCC 13939 / DSM 20539 / JCM 16871 / CCUG 27074 / LMG 4051 / NBRC 15346 / NCIMB 9279 / VKM B-1422 / R1) protein is Potassium-transporting ATPase ATP-binding subunit.